The sequence spans 106 residues: Iron-sulfur cluster assembly protein CyaY (106 aa).

The protein belongs to the frataxin family.

Involved in iron-sulfur (Fe-S) cluster assembly. May act as a regulator of Fe-S biogenesis. The protein is Iron-sulfur cluster assembly protein CyaY of Salmonella newport (strain SL254).